A 241-amino-acid polypeptide reads, in one-letter code: ATP phosphoribosyltransferase (241 aa).

The protein belongs to the ATP phosphoribosyltransferase family. Short subfamily. Heteromultimer composed of HisG and HisZ subunits.

Its subcellular location is the cytoplasm. It catalyses the reaction 1-(5-phospho-beta-D-ribosyl)-ATP + diphosphate = 5-phospho-alpha-D-ribose 1-diphosphate + ATP. Its pathway is amino-acid biosynthesis; L-histidine biosynthesis; L-histidine from 5-phospho-alpha-D-ribose 1-diphosphate: step 1/9. Catalyzes the condensation of ATP and 5-phosphoribose 1-diphosphate to form N'-(5'-phosphoribosyl)-ATP (PR-ATP). Has a crucial role in the pathway because the rate of histidine biosynthesis seems to be controlled primarily by regulation of HisG enzymatic activity. The chain is ATP phosphoribosyltransferase from Gluconobacter oxydans (strain 621H) (Gluconobacter suboxydans).